The sequence spans 157 residues: Ribonuclease H (157 aa).

Positions 2 to 145 (NAEISKIYTD…CDAIARAFAA (144 aa)) constitute an RNase H type-1 domain. Residues Asp11, Glu50, Asp74, and Asp137 each coordinate Mg(2+).

The protein belongs to the RNase H family. Monomer. Mg(2+) serves as cofactor.

The protein resides in the cytoplasm. The catalysed reaction is Endonucleolytic cleavage to 5'-phosphomonoester.. Its function is as follows. Endonuclease that specifically degrades the RNA of RNA-DNA hybrids. The protein is Ribonuclease H of Cyanothece sp. (strain PCC 7425 / ATCC 29141).